The following is a 152-amino-acid chain: Protein SprT-like (152 aa).

Residues 7–147 (QRLVEEVSLQ…CGKCKGKLKP (141 aa)) enclose the SprT-like domain. His-67 contributes to the Zn(2+) binding site. Glu-68 is an active-site residue. His-71 lines the Zn(2+) pocket.

The protein belongs to the SprT family. Zn(2+) is required as a cofactor.

The protein localises to the cytoplasm. This Bacillus cereus (strain B4264) protein is Protein SprT-like.